We begin with the raw amino-acid sequence, 266 residues long: Undecaprenyl-diphosphatase (266 aa).

The next 8 membrane-spanning stretches (helical) occupy residues 1 to 21 (MDTLQVIILALIQGLTEFLPI), 39 to 59 (QGLSFDVAVHIGSLAAVVIYF), 83 to 103 (SKLAWWIILATIPAIGVGFTA), 111 to 131 (LRGPGVIAITTVIFGLLLWFA), 149 to 169 (ALLIGVAQALALIPGTSRSGI), 183 to 203 (AAARFSFLMSIPVILGAALLM), 218 to 238 (ALALGSILSFIAAYACIYFFL), and 246 to 266 (MTPFVIYRIALGVFLCGFIYL).

The protein belongs to the UppP family.

Its subcellular location is the cell inner membrane. It carries out the reaction di-trans,octa-cis-undecaprenyl diphosphate + H2O = di-trans,octa-cis-undecaprenyl phosphate + phosphate + H(+). Its function is as follows. Catalyzes the dephosphorylation of undecaprenyl diphosphate (UPP). Confers resistance to bacitracin. The polypeptide is Undecaprenyl-diphosphatase (Shewanella amazonensis (strain ATCC BAA-1098 / SB2B)).